Reading from the N-terminus, the 78-residue chain is Large ribosomal subunit protein bL28 (78 aa).

Residues 1–20 form a disordered region; the sequence is MSRVCQVTGKRPVTGNNRSH.

This sequence belongs to the bacterial ribosomal protein bL28 family.

In Vibrio parahaemolyticus serotype O3:K6 (strain RIMD 2210633), this protein is Large ribosomal subunit protein bL28.